We begin with the raw amino-acid sequence, 605 residues long: Tyrosyl-DNA phosphodiesterase 1 (605 aa).

A Nuclear localization signal motif is present at residues 81–86 (RKKVKP). His236 functions as the Nucleophile in the catalytic mechanism. Lys238 is a binding site for substrate. An interaction with DNA region spans residues 379 to 382 (SLGS). His466 (proton donor/acceptor) is an active-site residue. Lys468 provides a ligand contact to substrate.

It belongs to the tyrosyl-DNA phosphodiesterase family. As to expression, ubiquitous, with a low level in roots.

Its subcellular location is the nucleus. Its activity is regulated as follows. Inhibited by vanadate analogs. In terms of biological role, DNA repair enzyme that can remove a variety of covalent adducts from DNA through hydrolysis of a 3'-phosphodiester bond, giving rise to DNA with a free 3' phosphate. Catalyzes the hydrolysis of dead-end complexes between DNA and the topoisomerase I active site tyrosine residue. This is Tyrosyl-DNA phosphodiesterase 1 from Arabidopsis thaliana (Mouse-ear cress).